The sequence spans 1651 residues: Putative serine/threonine-protein kinase/receptor R818 (1651 aa).

The signal sequence occupies residues 1-19 (MKSIGIFVVALWLTHFCDG). Residues Asn111, Asn135, Asn190, Asn236, Asn275, Asn276, Asn287, Asn452, Asn455, Asn477, Asn495, Asn540, Asn596, and Asn722 are each glycosylated (N-linked (GlcNAc...) asparagine; by host). Residues 749 to 769 (IILAIVIPVSFVICCIIIVLV) form a helical membrane-spanning segment. A Protein kinase 1 domain is found at 793–1057 (LDFMESLGSG…EIMTKLSTLI (265 aa)). ATP is bound by residues 799–807 (LGSGGSGEV) and Lys820. The active-site Proton acceptor is the Asp915. The segment at 1089–1115 (IHNNDETKNSFGSTTYGSNTISSSSNT) is disordered. Low complexity predominate over residues 1100–1115 (GSTTYGSNTISSSSNT). In terms of domain architecture, Guanylate cyclase spans 1135–1278 (IIVFTDIISA…VTVNIAAKIT (144 aa)). The Protein kinase 2 domain occupies 1394 to 1645 (IQIGKQIGVG…DVIMGLNDML (252 aa)). ATP-binding positions include 1400 to 1408 (IGVGSYGIV) and Lys1421. The Proton acceptor role is filled by Asp1515.

It localises to the membrane. It catalyses the reaction L-seryl-[protein] + ATP = O-phospho-L-seryl-[protein] + ADP + H(+). The enzyme catalyses L-threonyl-[protein] + ATP = O-phospho-L-threonyl-[protein] + ADP + H(+). This is Putative serine/threonine-protein kinase/receptor R818 from Acanthamoeba polyphaga mimivirus (APMV).